Here is a 205-residue protein sequence, read N- to C-terminus: Outer-membrane lipoprotein LolB (205 aa).

The N-terminal stretch at 1–17 (MFLRHFIVFSFIALLAG) is a signal peptide. Cys-18 carries N-palmitoyl cysteine lipidation. Residue Cys-18 is the site of S-diacylglycerol cysteine attachment.

The protein belongs to the LolB family. Monomer.

Its subcellular location is the cell outer membrane. Its function is as follows. Plays a critical role in the incorporation of lipoproteins in the outer membrane after they are released by the LolA protein. The protein is Outer-membrane lipoprotein LolB of Pseudomonas fluorescens (strain ATCC BAA-477 / NRRL B-23932 / Pf-5).